The primary structure comprises 358 residues: tRNA N6-adenosine threonylcarbamoyltransferase (358 aa).

Residues H111 and H115 each contribute to the Fe cation site. Substrate contacts are provided by residues 146-150 (LVSGG), D179, G192, and N294. Residue D322 coordinates Fe cation.

It belongs to the KAE1 / TsaD family. Fe(2+) is required as a cofactor.

It localises to the cytoplasm. The catalysed reaction is L-threonylcarbamoyladenylate + adenosine(37) in tRNA = N(6)-L-threonylcarbamoyladenosine(37) in tRNA + AMP + H(+). Required for the formation of a threonylcarbamoyl group on adenosine at position 37 (t(6)A37) in tRNAs that read codons beginning with adenine. Is involved in the transfer of the threonylcarbamoyl moiety of threonylcarbamoyl-AMP (TC-AMP) to the N6 group of A37, together with TsaE and TsaB. TsaD likely plays a direct catalytic role in this reaction. The polypeptide is tRNA N6-adenosine threonylcarbamoyltransferase (Helicobacter hepaticus (strain ATCC 51449 / 3B1)).